Consider the following 169-residue polypeptide: Holo-[acyl-carrier-protein] synthase (169 aa).

Positions 8 and 50 each coordinate Mg(2+).

The protein belongs to the P-Pant transferase superfamily. AcpS family. Mg(2+) is required as a cofactor.

It localises to the cytoplasm. The catalysed reaction is apo-[ACP] + CoA = holo-[ACP] + adenosine 3',5'-bisphosphate + H(+). Transfers the 4'-phosphopantetheine moiety from coenzyme A to a Ser of acyl-carrier-protein. In Thermotoga maritima (strain ATCC 43589 / DSM 3109 / JCM 10099 / NBRC 100826 / MSB8), this protein is Holo-[acyl-carrier-protein] synthase.